Reading from the N-terminus, the 186-residue chain is MSEPASISAGIAQRYATAIFAIAQDNNDLKGLETGINDLTAALGESADLRSLIASPLVSRAEQEAAITAVAKKMKLNPVLANALSLMAQKRRLFVLPQLLTALRDALAEARGEVTAEVASAKALTKTQIEKLTKTLSEKVGKSVTINATVDESLIGGLVVKVGSKMIDSSIRSKLNSLQNAMKEVG.

This sequence belongs to the ATPase delta chain family. F-type ATPases have 2 components, F(1) - the catalytic core - and F(0) - the membrane proton channel. F(1) has five subunits: alpha(3), beta(3), gamma(1), delta(1), epsilon(1). F(0) has three main subunits: a(1), b(2) and c(10-14). The alpha and beta chains form an alternating ring which encloses part of the gamma chain. F(1) is attached to F(0) by a central stalk formed by the gamma and epsilon chains, while a peripheral stalk is formed by the delta and b chains.

The protein resides in the cell inner membrane. Functionally, f(1)F(0) ATP synthase produces ATP from ADP in the presence of a proton or sodium gradient. F-type ATPases consist of two structural domains, F(1) containing the extramembraneous catalytic core and F(0) containing the membrane proton channel, linked together by a central stalk and a peripheral stalk. During catalysis, ATP synthesis in the catalytic domain of F(1) is coupled via a rotary mechanism of the central stalk subunits to proton translocation. This protein is part of the stalk that links CF(0) to CF(1). It either transmits conformational changes from CF(0) to CF(1) or is implicated in proton conduction. The polypeptide is ATP synthase subunit delta (Ruegeria pomeroyi (strain ATCC 700808 / DSM 15171 / DSS-3) (Silicibacter pomeroyi)).